Consider the following 202-residue polypeptide: Small ribosomal subunit protein uS4 (202 aa).

Residues 90 to 152 enclose the S4 RNA-binding domain; it reads MRLDNTVFRL…ERSRRLVETN (63 aa).

This sequence belongs to the universal ribosomal protein uS4 family. As to quaternary structure, part of the 30S ribosomal subunit. Contacts protein S5. The interaction surface between S4 and S5 is involved in control of translational fidelity.

In terms of biological role, one of the primary rRNA binding proteins, it binds directly to 16S rRNA where it nucleates assembly of the body of the 30S subunit. Its function is as follows. With S5 and S12 plays an important role in translational accuracy. This is Small ribosomal subunit protein uS4 from Thermosynechococcus vestitus (strain NIES-2133 / IAM M-273 / BP-1).